Consider the following 375-residue polypeptide: Anhydro-N-acetylmuramic acid kinase (375 aa).

Residue 12–19 (GTSLDGVD) coordinates ATP.

Belongs to the anhydro-N-acetylmuramic acid kinase family.

It carries out the reaction 1,6-anhydro-N-acetyl-beta-muramate + ATP + H2O = N-acetyl-D-muramate 6-phosphate + ADP + H(+). The protein operates within amino-sugar metabolism; 1,6-anhydro-N-acetylmuramate degradation. Its pathway is cell wall biogenesis; peptidoglycan recycling. Its function is as follows. Catalyzes the specific phosphorylation of 1,6-anhydro-N-acetylmuramic acid (anhMurNAc) with the simultaneous cleavage of the 1,6-anhydro ring, generating MurNAc-6-P. Is required for the utilization of anhMurNAc either imported from the medium or derived from its own cell wall murein, and thus plays a role in cell wall recycling. This chain is Anhydro-N-acetylmuramic acid kinase, found in Variovorax paradoxus (strain S110).